The chain runs to 544 residues: Chaperonin GroEL (544 aa).

Residues 29–32, 86–90, Gly-413, 476–478, and Asp-492 contribute to the ATP site; these read TLGP, DGTTT, and NAL.

Belongs to the chaperonin (HSP60) family. As to quaternary structure, forms a cylinder of 14 subunits composed of two heptameric rings stacked back-to-back. Interacts with the co-chaperonin GroES.

The protein resides in the cytoplasm. The catalysed reaction is ATP + H2O + a folded polypeptide = ADP + phosphate + an unfolded polypeptide.. Together with its co-chaperonin GroES, plays an essential role in assisting protein folding. The GroEL-GroES system forms a nano-cage that allows encapsulation of the non-native substrate proteins and provides a physical environment optimized to promote and accelerate protein folding. This chain is Chaperonin GroEL, found in Desulfitobacterium hafniense (strain Y51).